We begin with the raw amino-acid sequence, 248 residues long: Phosphomannomutase (248 aa).

D14 (nucleophile) is an active-site residue. Residues D14 and D16 each contribute to the Mg(2+) site. The Proton donor/acceptor role is filled by D16. Residues R23, R125, R136, R143, S181, and D183 each contribute to the alpha-D-mannose 1-phosphate site. The Mg(2+) site is built by D209, F221, and T226.

The protein belongs to the eukaryotic PMM family. As to quaternary structure, homodimer. Requires Mg(2+) as cofactor.

Its subcellular location is the cytoplasm. It carries out the reaction alpha-D-mannose 1-phosphate = D-mannose 6-phosphate. The protein operates within nucleotide-sugar biosynthesis; GDP-alpha-D-mannose biosynthesis; alpha-D-mannose 1-phosphate from D-fructose 6-phosphate: step 2/2. Its function is as follows. Catalyzes the interconversion of mannose-6-phosphate to mannose-1-phosphate, the precursor for the synthesis of GDP-mannose. GDP-mannose is an essential sugar nucleotide for the synthesis of D-mannose-containing cell wall polysaccharides (galactomannans and glucomannans), glycolipids, glycoproteins and the antioxidant L-ascorbate. In Oryza sativa subsp. indica (Rice), this protein is Phosphomannomutase.